The chain runs to 434 residues: Glutamate-1-semialdehyde 2,1-aminomutase 1 (434 aa).

The residue at position 270 (Lys-270) is an N6-(pyridoxal phosphate)lysine.

This sequence belongs to the class-III pyridoxal-phosphate-dependent aminotransferase family. HemL subfamily. In terms of assembly, homodimer. Pyridoxal 5'-phosphate serves as cofactor.

The protein resides in the cytoplasm. The catalysed reaction is (S)-4-amino-5-oxopentanoate = 5-aminolevulinate. Its pathway is porphyrin-containing compound metabolism; protoporphyrin-IX biosynthesis; 5-aminolevulinate from L-glutamyl-tRNA(Glu): step 2/2. This is Glutamate-1-semialdehyde 2,1-aminomutase 1 from Bacillus cereus (strain AH187).